The chain runs to 538 residues: Tryptophan 7-halogenase PrnA (538 aa).

FAD contacts are provided by G13, T15, A16, S39, I42, I45, E49, and A50. The active site involves K79. K79 contacts 7-chloro-L-tryptophan. Residues V187 and L337 each coordinate FAD. Residue E346 participates in 7-chloro-L-tryptophan binding. E346 is a binding site for L-tryptophan. Residues T348 and G349 each coordinate chloride. Position 350 (I350) interacts with FAD. 7-chloro-L-tryptophan is bound by residues Y443, Y444, E450, and F454. Positions 443, 444, 450, and 454 each coordinate L-tryptophan.

It belongs to the flavin-dependent halogenase family. Bacterial tryptophan halogenase subfamily. In terms of assembly, homodimer.

It catalyses the reaction L-tryptophan + FADH2 + chloride + O2 = 7-chloro-L-tryptophan + FAD + 2 H2O. The protein operates within antibiotic biosynthesis. Its function is as follows. Involved in the biosynthesis of the antifungal antibiotic pyrrolnitrin. Catalyzes the chlorination of tryptophan (Trp) at C7 position to yield 7-chloro-L-tryptophan (7-CLT). This Pseudomonas fluorescens protein is Tryptophan 7-halogenase PrnA.